The chain runs to 30 residues: Propionyl-CoA carboxylase alpha chain (30 aa).

Positions 1–30 (PKIRKVLVANRGEIAIRVMRTXKELGIATV) constitute a Biotin carboxylation domain.

In terms of assembly, dodecamer composed of six biotin-containing alpha subunits and six beta subunits. The cofactor is Mg(2+). Mn(2+) is required as a cofactor. Biotin serves as cofactor.

It catalyses the reaction propanoyl-CoA + hydrogencarbonate + ATP = (S)-methylmalonyl-CoA + ADP + phosphate + H(+). The protein operates within metabolic intermediate metabolism; propanoyl-CoA degradation; succinyl-CoA from propanoyl-CoA: step 1/3. Functionally, this is one of the 2 subunits of the biotin-dependent propionyl-CoA carboxylase (PCC), the enzyme catalyzing the carboxylation of propionyl-CoA/propanoyl-CoA to D-methylmalonyl-CoA/(S)-methylmalonyl-CoA. Within the holoenzyme, the alpha subunit catalyzes the ATP-dependent carboxylation of the biotin carried by the biotin carboxyl carrier (BCC) domain, while the beta subunit then transfers the carboxyl group from carboxylated biotin to propionyl-CoA. Propionyl-CoA carboxylase also carboxylates acetyl-CoA, butyryl-CoA and succinyl-CoA. This chain is Propionyl-CoA carboxylase alpha chain, found in Myxococcus xanthus.